Here is a 323-residue protein sequence, read N- to C-terminus: Cytochrome c biogenesis protein CcsA (323 aa).

The next 8 membrane-spanning stretches (helical) occupy residues 9 to 29 (ILTH…LLNL), 45 to 62 (MMAT…RWIY), 71 to 91 (LYES…VPYF), 98 to 118 (LSAI…SGLL), 143 to 163 (MLLG…LLVI), 227 to 247 (IISL…VWAN), 261 to 275 (TWAF…IYLH), and 285 to 305 (VGPA…YFGV).

It belongs to the CcmF/CycK/Ccl1/NrfE/CcsA family. In terms of assembly, may interact with Ccs1.

The protein localises to the plastid. It is found in the chloroplast thylakoid membrane. Functionally, required during biogenesis of c-type cytochromes (cytochrome c6 and cytochrome f) at the step of heme attachment. In Calycanthus floridus var. glaucus (Eastern sweetshrub), this protein is Cytochrome c biogenesis protein CcsA.